The sequence spans 199 residues: Twist-related protein (199 aa).

The interval 1 to 43 (MQEHQLSRVTSGNKKKYQSFDDESRDEKRMKCDSTDKLESNSN) is disordered. Basic and acidic residues predominate over residues 25-39 (RDEKRMKCDSTDKLE). A bHLH domain is found at 51–102 (THRVIANIRERQRTQALNQSFSTLRKIIPTLPSDKLSKIQTLRLAAMYIDFL).

As to quaternary structure, efficient DNA binding requires dimerization with another bHLH protein. Homodimer. Expression is seen at the point of medusa formation in the ectodermal and endodermal bud tissues, and in the entocodon which gives rise to all smooth and striated muscle cells. After the subumbrellar plate differentiates from the endoderm, strong expression is detected until the medusa detaches from the gonzoid. Expression is observed in the distal part of the medusa but diminishes in entocodon-derived muscles as the tissues differentiate, with expression disappearing completely after stage 8. In later stages expression is seen in the distal and proximal parts of the bud and depending on state of maturity, in the developing gonadal tissue.

It localises to the nucleus. In terms of biological role, probable transcription factor, which may be responsible for the formation of myoepithelial cells in early muscle development in larva and the formation of non-muscle tissues in later bud stages and mesoderm-like structures in the medusa. The polypeptide is Twist-related protein (Podocoryna carnea (Hydrozoan)).